The chain runs to 218 residues: Thiopurine S-methyltransferase (218 aa).

Trp-10, Leu-45, Glu-66, and Arg-123 together coordinate S-adenosyl-L-methionine.

It belongs to the class I-like SAM-binding methyltransferase superfamily. TPMT family.

The protein resides in the cytoplasm. It carries out the reaction S-adenosyl-L-methionine + a thiopurine = S-adenosyl-L-homocysteine + a thiopurine S-methylether.. The chain is Thiopurine S-methyltransferase from Pseudomonas aeruginosa (strain UCBPP-PA14).